A 184-amino-acid polypeptide reads, in one-letter code: uncharacterized protein (184 aa).

A helical transmembrane segment spans residues 5 to 27 (YLLATAMFLIVCVYVISETVNLH).

The protein resides in the membrane. This is an uncharacterized protein from Methanocaldococcus jannaschii (strain ATCC 43067 / DSM 2661 / JAL-1 / JCM 10045 / NBRC 100440) (Methanococcus jannaschii).